Reading from the N-terminus, the 204-residue chain is MKNIEDLIQKAVELQNNGLGTGQIADELNVSRETVTWLLTRSKKEVAAPAPKDISVNWSSIGKSATRLHYISLALCDMVIETLEKTNTEVDVVVGVAASGIPLASMMANELGADFALYHSRKGQDMVQPGQKGTISRNFGSVAGKNCVIVDDVITTGSTTMEVIEQLREMDAKPRAVVVLVDKKGADTIANVPIQSLVRIVRVD.

The protein belongs to the purine/pyrimidine phosphoribosyltransferase family. GfcR subfamily.

This Methanosarcina mazei (strain ATCC BAA-159 / DSM 3647 / Goe1 / Go1 / JCM 11833 / OCM 88) (Methanosarcina frisia) protein is Transcriptional regulator GfcR.